A 119-amino-acid polypeptide reads, in one-letter code: Mitochondrial coiled-coil domain protein 1 (119 aa).

The transit peptide at M1–A24 directs the protein to the mitochondrion. A disordered region spans residues P25 to A65. A compositionally biased stretch (polar residues) spans C31–M52. Residues H62–G116 are a coiled coil.

Widely expressed. Expressed in adult and fetal liver, kidney and lung. Expressed in fetal brain. Weakly expressed in fetal spleen.

Its subcellular location is the mitochondrion. The sequence is that of Mitochondrial coiled-coil domain protein 1 (MCCD1) from Homo sapiens (Human).